Here is a 387-residue protein sequence, read N- to C-terminus: NifS-like protein (387 aa).

Pyridoxal 5'-phosphate contacts are provided by residues 58-59 (SE) and 184-186 (SIN).

It belongs to the class-V pyridoxal-phosphate-dependent aminotransferase family. NifS/IscS subfamily. It depends on pyridoxal 5'-phosphate as a cofactor.

Its subcellular location is the virion. This chain is NifS-like protein, found in African swine fever virus (isolate Tick/South Africa/Pretoriuskop Pr4/1996) (ASFV).